Consider the following 257-residue polypeptide: G2/mitotic-specific cyclin S13-7 (257 aa).

This sequence belongs to the cyclin family. Cyclin AB subfamily. As to quaternary structure, interacts with the CDC2 protein kinase to form a serine/threonine kinase holoenzyme complex also known as maturation promoting factor (MPF). The cyclin subunit imparts substrate specificity to the complex.

In terms of biological role, essential for the control of the cell cycle at the G2/M (mitosis) transition. In Glycine max (Soybean), this protein is G2/mitotic-specific cyclin S13-7.